The following is a 359-amino-acid chain: Quinolinate synthase (359 aa).

The iminosuccinate site is built by His81 and Ser99. Cys144 contacts [4Fe-4S] cluster. Iminosuccinate contacts are provided by residues 170–172 (YVN) and Ser187. Residue Cys229 coordinates [4Fe-4S] cluster. Residues 255 to 257 (HPE) and Thr272 each bind iminosuccinate. Cys315 contributes to the [4Fe-4S] cluster binding site.

It belongs to the quinolinate synthase family. Type 2 subfamily. Requires [4Fe-4S] cluster as cofactor.

The protein resides in the cytoplasm. It catalyses the reaction iminosuccinate + dihydroxyacetone phosphate = quinolinate + phosphate + 2 H2O + H(+). The protein operates within cofactor biosynthesis; NAD(+) biosynthesis; quinolinate from iminoaspartate: step 1/1. Its function is as follows. Catalyzes the condensation of iminoaspartate with dihydroxyacetone phosphate to form quinolinate. In Sinorhizobium medicae (strain WSM419) (Ensifer medicae), this protein is Quinolinate synthase.